The chain runs to 85 residues: V-type proton ATPase subunit f (85 aa).

At 1-10 (MRPVVSTGKA) the chain is on the lumenal side. The chain crosses the membrane as a helical span at residues 11–31 (WCCTVLSAFGVVILSVIAHLF). Topologically, residues 32–54 (NTNHESFVGSINDPEDGPAVAHT) are cytoplasmic. Residues 55–75 (VYLAALVYLVFFVFCGFQVYL) form a helical membrane-spanning segment. Topologically, residues 76 to 85 (ARRKPSIELR) are lumenal.

As to quaternary structure, V-ATPase is a heteromultimeric enzyme composed of a peripheral catalytic V1 complex (components A to H) attached to an integral membrane V0 proton pore complex (components: a, c, c', c'', d, e, f and VOA1).

The protein resides in the endoplasmic reticulum membrane. Its subcellular location is the vacuole membrane. Its function is as follows. Accessory component of the V0 complex of vacuolar(H+)-ATPase (V-ATPase), a multisubunit enzyme composed of a peripheral complex (V1) that hydrolyzes ATP and a membrane integral complex (V0) that translocates protons. V-ATPase is responsible for acidifying and maintaining the pH of intracellular compartments. This Saccharomyces cerevisiae (strain ATCC 204508 / S288c) (Baker's yeast) protein is V-type proton ATPase subunit f.